The following is a 176-amino-acid chain: Corrinoid adenosyltransferase (176 aa).

ATP-binding positions include 6–14 (TRTGDNGTT), K24, 131–136 (RRLERI), and N155.

The protein belongs to the Cob(I)alamin adenosyltransferase family.

The protein localises to the cytoplasm. It catalyses the reaction 2 cob(II)yrinate a,c diamide + reduced [electron-transfer flavoprotein] + 2 ATP = 2 adenosylcob(III)yrinate a,c-diamide + 2 triphosphate + oxidized [electron-transfer flavoprotein] + 3 H(+). It carries out the reaction 2 cob(II)alamin + reduced [electron-transfer flavoprotein] + 2 ATP = 2 adenosylcob(III)alamin + 2 triphosphate + oxidized [electron-transfer flavoprotein] + 3 H(+). Its pathway is cofactor biosynthesis; adenosylcobalamin biosynthesis; adenosylcobalamin from cob(II)yrinate a,c-diamide: step 2/7. In Citrobacter freundii, this protein is Corrinoid adenosyltransferase.